The chain runs to 293 residues: Protease HtpX (293 aa).

2 helical membrane-spanning segments follow: residues Ile-4–Leu-24 and Gly-34–Ser-54. Position 139 (His-139) interacts with Zn(2+). Glu-140 is a catalytic residue. Residue His-143 coordinates Zn(2+). The next 2 membrane-spanning stretches (helical) occupy residues Ile-158 to Leu-178 and Met-193 to Ile-213. Glu-222 contacts Zn(2+).

This sequence belongs to the peptidase M48B family. It depends on Zn(2+) as a cofactor.

It is found in the cell inner membrane. The protein is Protease HtpX of Yersinia enterocolitica serotype O:8 / biotype 1B (strain NCTC 13174 / 8081).